Reading from the N-terminus, the 361-residue chain is tRNA-specific 2-thiouridylase MnmA (361 aa).

Residues 6–13 (LVSGGVDS) and I32 each bind ATP. Residues 93–95 (NPD) are interaction with target base in tRNA. The Nucleophile role is filled by C98. A disulfide bridge links C98 with C193. Residue G121 participates in ATP binding. The segment at 143 to 145 (KDQ) is interaction with tRNA. Residue C193 is the Cysteine persulfide intermediate of the active site.

This sequence belongs to the MnmA/TRMU family.

The protein localises to the cytoplasm. The catalysed reaction is S-sulfanyl-L-cysteinyl-[protein] + uridine(34) in tRNA + AH2 + ATP = 2-thiouridine(34) in tRNA + L-cysteinyl-[protein] + A + AMP + diphosphate + H(+). In terms of biological role, catalyzes the 2-thiolation of uridine at the wobble position (U34) of tRNA, leading to the formation of s(2)U34. The polypeptide is tRNA-specific 2-thiouridylase MnmA (Porphyromonas gingivalis (strain ATCC BAA-308 / W83)).